The primary structure comprises 208 residues: Large ribosomal subunit protein uL4 (208 aa).

The segment at 58–77 (RGGGRKPWRQKGTGRARQGS) is disordered. Residues 60 to 71 (GGRKPWRQKGTG) are compositionally biased toward basic residues.

It belongs to the universal ribosomal protein uL4 family. As to quaternary structure, part of the 50S ribosomal subunit.

Its function is as follows. One of the primary rRNA binding proteins, this protein initially binds near the 5'-end of the 23S rRNA. It is important during the early stages of 50S assembly. It makes multiple contacts with different domains of the 23S rRNA in the assembled 50S subunit and ribosome. Functionally, forms part of the polypeptide exit tunnel. The chain is Large ribosomal subunit protein uL4 from Caldicellulosiruptor bescii (strain ATCC BAA-1888 / DSM 6725 / KCTC 15123 / Z-1320) (Anaerocellum thermophilum).